We begin with the raw amino-acid sequence, 268 residues long: Cell division coordinator CpoB (268 aa).

The first 21 residues, 1–21 (MRMCRRVVTVLALSLPLAAWA), serve as a signal peptide directing secretion. Residues 58 to 94 (QLFMQLQQMQDQLSRQQGIIEELQNDVSRMKQENLER) are a coiled coil. The interval 104–146 (SGAAPAATPDNSSGGGASNAAPDAAAGAAAQQPAGSSQPGDPA) is disordered. A compositionally biased stretch (low complexity) spans 121-143 (SNAAPDAAAGAAAQQPAGSSQPG). 3 TPR repeats span residues 149-181 (KLYYDAAFDLIKQKDFDKASQAFNAFLRKYPNS), 185-218 (GNAQYWLGEVNLAKGDLQGASQAFAQVSQKYPKH), and 222-255 (PDSLYKLADVERRMGHTDKVKGILQQVVTQYPGT).

This sequence belongs to the CpoB family.

It localises to the periplasm. Mediates coordination of peptidoglycan synthesis and outer membrane constriction during cell division. The polypeptide is Cell division coordinator CpoB (Pseudomonas putida (strain ATCC 47054 / DSM 6125 / CFBP 8728 / NCIMB 11950 / KT2440)).